The sequence spans 193 residues: General stress protein 16U (193 aa).

It belongs to the CAPAB/TerDEXZ family.

This Bacillus subtilis (strain 168) protein is General stress protein 16U (yceD).